The sequence spans 311 residues: Cytochrome c biogenesis protein CcsA (311 aa).

The next 8 membrane-spanning stretches (helical) occupy residues 11-31 (VLLLGLMAFGALLLALPLAFW), 44-64 (VVQLLVVAANLLLTAQLLWRW), 68-88 (GHFPISNLYESLCFLAWGCTF), 101-121 (LVPAATTPMALVCVAFASFAL), 146-166 (VIMMSYAALLVGSLLSAAVLF), 217-237 (TITVGFLLLTVGIISGAVWAN), 251-268 (TWALICWLVYAAYLHTRL), and 280-300 (VAVSGLFVISVCYIGVNLLGI).

This sequence belongs to the CcmF/CycK/Ccl1/NrfE/CcsA family. May interact with ccs1.

It is found in the cellular thylakoid membrane. In terms of biological role, required during biogenesis of c-type cytochromes (cytochrome c6 and cytochrome f) at the step of heme attachment. This chain is Cytochrome c biogenesis protein CcsA, found in Synechococcus sp. (strain RCC307).